A 528-amino-acid chain; its full sequence is Tubulin-specific chaperone E (528 aa).

One can recognise a CAP-Gly domain in the interval Gly-27–Arg-71. LRR repeat units lie at residues Cys-152–Asp-176, Leu-178–Thr-206, Leu-207–Trp-229, Val-231–Gln-253, Thr-254–Ile-274, Arg-279–Ile-300, and Ser-309–Asp-330. Residues Asn-343–Asp-385 form the LRRCT domain. Residue Lys-464 is modified to N6-acetyllysine. At Ser-496 the chain carries Phosphoserine.

Belongs to the TBCE family. In terms of assembly, supercomplex made of cofactors A to E. Cofactors A and D function by capturing and stabilizing tubulin in a quasi-native conformation. Cofactor E binds to the cofactor D-tubulin complex; interaction with cofactor C then causes the release of tubulin polypeptides that are committed to the native state. Cofactors B and E can form a heterodimer which binds to alpha-tubulin and enhances their ability to dissociate tubulin heterodimers. Interacts with TBCD.

Its subcellular location is the cytoplasm. The protein localises to the cytoskeleton. In terms of biological role, tubulin-folding protein; involved in the second step of the tubulin folding pathway and in the regulation of tubulin heterodimer dissociation. Required for correct organization of microtubule cytoskeleton and mitotic splindle, and maintenance of the neuronal microtubule network. The chain is Tubulin-specific chaperone E (TBCE) from Bos taurus (Bovine).